Here is a 182-residue protein sequence, read N- to C-terminus: Signal peptidase I (182 aa).

The Cytoplasmic segment spans residues 1–13 (MTKQKEKRGRRWP). The chain crosses the membrane as a helical span at residues 14-30 (WFVAVCVVATLRLFVFS). Residues 31–182 (NYVVEGKSMM…WPFKQFAFQF (152 aa)) lie on the Extracellular side of the membrane. Active-site residues include Ser38 and Lys79.

Belongs to the peptidase S26 family.

The protein resides in the cell membrane. It catalyses the reaction Cleavage of hydrophobic, N-terminal signal or leader sequences from secreted and periplasmic proteins.. The chain is Signal peptidase I (lepB) from Bacillus caldolyticus.